The chain runs to 470 residues: TNF receptor-associated factor 4 (470 aa).

The RING-type zinc finger occupies C18 to Q58. TRAF-type zinc fingers lie at residues G101 to E154, S155 to Q208, and S209 to G267. K263 is covalently cross-linked (Glycyl lysine isopeptide (Lys-Gly) (interchain with G-Cter in ubiquitin)). The stretch at H277–L310 forms a coiled coil. An MATH domain is found at D307–V462. Phosphoserine is present on S426.

The protein belongs to the TNF receptor-associated factor family. B subfamily. In terms of assembly, homotrimer. Interacts with LTBR/TNFRSF3, NGFR/TNFRSF16, RPS6KB1 and TGFB1I1. Interacts with SMURF1. Interacts (via TRAF domain) with MAP3K4 (via kinase domain). Interacts with NCF1, TICAM1, IRAK1 and TRAF6, and is probably part of a complex containing TRAF4, NCF1, TICAM1, IRAK1 and TRAF6. Interacts (via MATH domain) with GP6 and GP1BB. Interacts with EGFR (via C-terminal region); this interaction promotes the formation of EGFR asymmetric dimers. Interacts with PKM; this interaction promotes PKM kinase activity. Post-translationally, polyubiquitinated, leading to its proteasomal degradation. Ubiquitinated at Lys-263 by the SCF(FBXL2) complex, leading to its degradation by the proteasome. As to expression, predominantly expressed in brain. Preferentially expressed by postmitotic undifferentiated neurons in developing central (CNS) and peripheral (PNS) nervous system, and in nervous tissues of sensory organs. In the embryo, protein expression was shown in brain, thymus, salivary glands and intestine. In the adult, protein expression is restricted to the brain (hippocampus and olfactory bulb).

It is found in the cytoplasm. The protein localises to the nucleus. Its subcellular location is the perinuclear region. The protein resides in the cell junction. It localises to the tight junction. It is found in the cell membrane. The protein localises to the cytoskeleton. The catalysed reaction is S-ubiquitinyl-[E2 ubiquitin-conjugating enzyme]-L-cysteine + [acceptor protein]-L-lysine = [E2 ubiquitin-conjugating enzyme]-L-cysteine + N(6)-ubiquitinyl-[acceptor protein]-L-lysine.. It functions in the pathway protein degradation; proteasomal ubiquitin-dependent pathway. Functionally, adapter protein with E3 ligase activity that is involved in many diverse biological processes including cell proliferation, migration, differentiation, DNA repair, platelet activation or apoptosis. Promotes EGFR-mediated signaling by facilitating the dimerization of EGFR and downstream AKT activation thereby promoting cell proliferation. Ubiquitinates SMURF2 through 'Lys-48'-linked ubiquitin chain leading to SMURF2 degradation through the proteasome and subsequently osteogenic differentiation. Promotes 'Lys-63'-mediated ubiquitination of CHK1 which in turn activates cell cycle arrest and activation of DNA repair. In addition, promotes an atypical 'Lys-29'-linked ubiquitination at the C-terminal end of IRS1 which is crucial for insulin-like growth factor (IGF) signal transduction. Regulates activation of NF-kappa-B in response to signaling through Toll-like receptors. Required for normal skeleton development, and for normal development of the respiratory tract. Required for activation of RPS6KB1 in response to TNF signaling. Modulates TRAF6 functions. Inhibits adipogenic differentiation by activating pyruvate kinase PKM activity and subsequently the beta-catenin signaling pathway. The sequence is that of TNF receptor-associated factor 4 (Traf4) from Mus musculus (Mouse).